We begin with the raw amino-acid sequence, 472 residues long: Eukaryotic translation initiation factor 2 subunit 3B (472 aa).

Alanine 2 is modified (N-acetylalanine). Residue serine 16 is modified to Phosphoserine. Residues 39 to 248 (QATINIGTIG…IVKKIPVPPR (210 aa)) form the tr-type G domain. Positions 48–55 (GHVAHGKS) are G1. 51–56 (AHGKST) contacts GTP. Positions 76-80 (NITIK) are G2. Residues 134 to 137 (DCPG) are G3. GTP-binding positions include 190–193 (NKID) and 225–227 (SAQ). Residues 190 to 193 (NKID) form a G4 region. The interval 225–227 (SAQ) is G5.

Belongs to the TRAFAC class translation factor GTPase superfamily. Classic translation factor GTPase family. EIF2G subfamily. As to quaternary structure, eIF2 is a heterotrimer composed of an alpha, a beta and a gamma chain. eIF2 is member of the 43S pre-initiation complex (43S PIC). In terms of tissue distribution, specifically expressed in testis at the mRNA level.

It carries out the reaction GTP + H2O = GDP + phosphate + H(+). In terms of biological role, member of the eIF2 complex that functions in the early steps of protein synthesis by forming a ternary complex with GTP and initiator tRNA. This complex binds to a 40S ribosomal subunit, followed by mRNA binding to form the 43S pre-initiation complex (43S PIC). Junction of the 60S ribosomal subunit to form the 80S initiation complex is preceded by hydrolysis of the GTP bound to eIF2 and release of an eIF2-GDP binary complex. In order for eIF2 to recycle and catalyze another round of initiation, the GDP bound to eIF2 must exchange with GTP by way of a reaction catalyzed by eIF-2B. In Homo sapiens (Human), this protein is Eukaryotic translation initiation factor 2 subunit 3B.